The following is a 269-amino-acid chain: Surfeit locus protein 4 (269 aa).

The next 6 helical transmembrane spans lie at 64 to 84 (FLAS…CILV), 92 to 112 (YACF…SILW), 157 to 177 (MQLG…HFDM), 179 to 199 (FFYI…AIGF), 203 to 223 (LAAL…NAFW), and 242 to 262 (TMSV…GVSM). Residues 266–269 (KKEW) carry the Di-lysine motif motif.

The protein belongs to the SURF4 family.

It localises to the endoplasmic reticulum membrane. Its subcellular location is the endoplasmic reticulum-Golgi intermediate compartment membrane. The protein resides in the golgi apparatus membrane. Functionally, endoplasmic reticulum cargo receptor that mediates the export of lipoproteins by recruiting cargos into COPII vesicles to facilitate their secretion. Acts as a cargo receptor for lipoproteins bearing both APOB and APOA1, thereby regulating lipoprotein delivery and the maintenance of lipid homeostasis. The protein is Surfeit locus protein 4 of Gallus gallus (Chicken).